Here is a 590-residue protein sequence, read N- to C-terminus: MAAPYPGSGGGSEVKCVGGRGASVPWDFLPGLMVKAPSGPCLQAQRKEKSRNAARSRRGKENLEFFELAKLLPLPGAISSQLDKASIVRLSVTYLRLRRFAALGAPPWGLRAAGPPAGLAPGRRGPAALVSEVFEQHLGGHILQSLDGFVFALNQEGKFLYISETVSIYLGLSQVEMTGSSVFDYIHPGDHSEVLEQLGLRTPTPGPPTPPSVSSSSSSSSSLADTPEIEASLTKVPPSSLVQERSFFVRMKSTLTKRGLHVKASGYKVIHVTGRLRAHALGLVALGHTLPPAPLAELPLHGHMIVFRLSLGLTILACESRVSDHMDLGPSELVGRSCYQFVHGQDATRIRQSHVDLLDKGQVMTGYYRWLQRAGGFVWLQSVATVAGSGKSPGEHHVLWVSHVLSQAEGGQTPLDAFQLPASVACEEASSPGPEPTEPEPPTEGKQAAPAENEAPQTQGKRIKVEPGPRETKGSEDSGDEDPSSHPATPRPEFTSVIRAGVLKQDPVRPWGLAPPGDPPPTLLHAGFLPPVVRGLCTPGTIRYGPAELGLVYPHLQRLGPGPALPEAFYPPLGLPYPGPAGTRLPRKGD.

Positions 45–98 (QRKEKSRNAARSRRGKENLEFFELAKLLPLPGAISSQLDKASIVRLSVTYLRLR) constitute a bHLH domain. The PAS 1 domain maps to 135-207 (EQHLGGHILQ…LGLRTPTPGP (73 aa)). A disordered region spans residues 198-229 (LGLRTPTPGPPTPPSVSSSSSSSSSLADTPEI). Residues 212–222 (SVSSSSSSSSS) are compositionally biased toward low complexity. The region spanning 293–359 (APLAELPLHG…IRQSHVDLLD (67 aa)) is the PAS 2 domain. The 44-residue stretch at 365–408 (TGYYRWLQRAGGFVWLQSVATVAGSGKSPGEHHVLWVSHVLSQA) folds into the PAC domain. The segment at 425-494 (ACEEASSPGP…SHPATPRPEF (70 aa)) is disordered. Residues 433-442 (GPEPTEPEPP) show a composition bias toward pro residues. Positions 463 to 476 (IKVEPGPRETKGSE) are enriched in basic and acidic residues.

As to quaternary structure, efficient DNA binding requires dimerization with another bHLH protein. Interacts with ARNT; forms a heterodimer that binds core DNA sequence 5'-[AG]CGTG-3' within the hypoxia response element (HRE) leading to a transcriptional repressor on its target gene TH.

The protein localises to the nucleus. Its function is as follows. May control regulatory pathways relevant to schizophrenia and to psychotic illness. May play a role in late central nervous system development by modulating EPO expression in response to cellular oxygen level. Forms a heterodimer that binds core DNA sequence 5'-TACGTG-3' within the hypoxia response element (HRE) leading to transcriptional repression on its target gene TH. In Homo sapiens (Human), this protein is Neuronal PAS domain-containing protein 1 (NPAS1).